A 289-amino-acid chain; its full sequence is Pyridoxal kinase PdxY (289 aa).

Substrate is bound by residues serine 9 and 44-45; that span reads TQ. ATP-binding positions include aspartate 112, alanine 144, glutamate 149, lysine 183, and 210-213; that span reads RPLV. Aspartate 225 contributes to the substrate binding site.

This sequence belongs to the pyridoxine kinase family. PdxY subfamily. In terms of assembly, homodimer. It depends on Mg(2+) as a cofactor.

The catalysed reaction is pyridoxal + ATP = pyridoxal 5'-phosphate + ADP + H(+). It participates in cofactor metabolism; pyridoxal 5'-phosphate salvage; pyridoxal 5'-phosphate from pyridoxal: step 1/1. Its function is as follows. Pyridoxal kinase involved in the salvage pathway of pyridoxal 5'-phosphate (PLP). Catalyzes the phosphorylation of pyridoxal to PLP. The sequence is that of Pyridoxal kinase PdxY from Proteus mirabilis.